An 879-amino-acid chain; its full sequence is Nuclear autoantigen Sp-100 (879 aa).

Ala2 is modified (N-acetylalanine). Position 18 is a phosphoserine (Ser18). The region spanning 33–149 (DLQRMFTEDQ…IYKGFENVIH (117 aa)) is the HSR domain. The segment at 154 to 245 (LQESEEEERE…EQCAQKAEPT (92 aa)) is disordered. The residue at position 157 (Ser157) is a Phosphoserine. Residues 165-168 (RSGL) carry the D-box; recognition signal for CDC20-mediated degradation motif. Phosphoserine is present on residues Ser171, Ser180, and Ser228. The span at 176 to 200 (TGENSFRSLTWPPSGSPSHAGTTPP) shows a compositional bias: polar residues. Residues 207 to 228 (HPCETEQINAKRKDTTSDKDDS) show a composition bias toward basic and acidic residues. A compositionally biased stretch (polar residues) spans 229-238 (LGSQQTNEQC). A Glycyl lysine isopeptide (Lys-Gly) (interchain with G-Cter in SUMO2) cross-link involves residue Lys241. Positions 284–297 (IQINSCSVRLVDIK) match the PxVxL motif motif. A Glycyl lysine isopeptide (Lys-Gly) (interchain with G-Cter in SUMO) cross-link involves residue Lys297. Residues Lys300 and Lys306 each participate in a glycyl lysine isopeptide (Lys-Gly) (interchain with G-Cter in SUMO2) cross-link. Phosphoserine is present on residues Ser331 and Ser362. The tract at residues 333–478 (GSTDVDEPLE…SSSLRRGSGS (146 aa)) is sufficient to mediate interaction with ETS1. A disordered region spans residues 345 to 386 (ISAPRSEPVINNDNPLESNDEKEGQEATCSRPQIVPEPMDFR). Glycyl lysine isopeptide (Lys-Gly) (interchain with G-Cter in SUMO2) cross-links involve residues Lys366 and Lys387. A phosphoserine mark is found at Ser394, Ser407, Ser409, Ser410, and Ser451. The interval 401–596 (GQDHDFSESS…KRGPRIPKDE (196 aa)) is disordered. Polar residues predominate over residues 466-482 (ETCSSSLRRGSGSQPQE). Over residues 530–591 (SGKRRKKRRH…LKRRRKRGPR (62 aa)) the composition is skewed to basic residues. Short sequence motifs (nuclear localization signal) lie at residues 536-553 (KRRH…RKKD) and 568-592 (KRWQ…GPRI). Lys594 is covalently cross-linked (Glycyl lysine isopeptide (Lys-Gly) (interchain with G-Cter in SUMO2)). Residues 595 to 676 (DENINFKQSE…KVLMENKFLP (82 aa)) form the SAND domain. 2 DNA-binding regions (HMG box) span residues 677-753 (EPPS…KTYI) and 769-837 (PKRP…AAYR). Residues 717–734 (KKCSETWKTIFAKEKGKF) carry the Nuclear localization signal motif. The segment at 835 to 879 (AYRAKGKPNSAKKRVVKAEKSKKKKEEEEDEEDEQEEENEEDDDK) is disordered. A compositionally biased stretch (basic residues) spans 838–857 (AKGKPNSAKKRVVKAEKSKK). Residues 861 to 879 (EEEDEEDEQEEENEEDDDK) are compositionally biased toward acidic residues.

In terms of assembly, homodimer; isoforms are able to heterodimerize. Interacts with members of the HP1 family of nonhistone chromosomal protein, such as CBX5 and CBX3 via the PxVxL motif. Interacts with ETS1; the interaction is direct and modulates ETS1 transcriptional activity. Interacts with the MRN complex which is composed of two heterodimers RAD50/MRE11 associated with a single NBN; recruits the complex to PML-related bodies. Interacts with HIPK2; positively regulates TP53-dependent transcription. Interacts with CASP8AP2; may negatively regulate CASP8AP2 export from the nucleus to the cytoplasm. Interacts with SUMO1P1/SUMO5. (Microbial infection) Interacts with Epstein-Barr virus EBNA-LP; this interaction is important for EBNA-LP coactivator activity. As to quaternary structure, (Microbial infection) Interacts with human cytomegalovirus/HHV-5 protein UL123; may play a role in infection by the virus. In terms of processing, sumoylated. Sumoylation depends on a functional nuclear localization signal but is not necessary for nuclear import or nuclear body targeting. Sumoylated. Sumoylated with SUMO1. Sumoylation depends on a functional nuclear localization signal but is not necessary for nuclear import or nuclear body targeting. Sumoylation may stabilize the interaction with CBX5. Post-translationally, (Microbial infection) Immediate early protein IE1 of human cytomegalovirus (HHV-5) interferes with the sumoylation of SP100. As to expression, widely expressed. Sp100-B is expressed only in spleen, tonsil, thymus, mature B-cell line and some T-cell line, but not in brain, liver, muscle or non-lymphoid cell lines.

It is found in the nucleus. The protein localises to the PML body. Its subcellular location is the nuclear body. The protein resides in the cytoplasm. Its function is as follows. Together with PML, this tumor suppressor is a major constituent of the PML bodies, a subnuclear organelle involved in a large number of physiological processes including cell growth, differentiation and apoptosis. Functions as a transcriptional coactivator of ETS1 and ETS2 according to PubMed:11909962. Under certain conditions, it may also act as a corepressor of ETS1 preventing its binding to DNA according to PubMed:15247905. Through the regulation of ETS1 it may play a role in angiogenesis, controlling endothelial cell motility and invasion. Through interaction with the MRN complex it may be involved in the regulation of telomeres lengthening. May also regulate TP53-mediated transcription and through CASP8AP2, regulate FAS-mediated apoptosis. Also plays a role in infection by viruses, including human cytomegalovirus and Epstein-Barr virus, through mechanisms that may involve chromatin and/or transcriptional regulation. This is Nuclear autoantigen Sp-100 (SP100) from Homo sapiens (Human).